The following is a 314-amino-acid chain: Carbamate kinase (314 aa).

It belongs to the carbamate kinase family.

It is found in the cytoplasm. It catalyses the reaction hydrogencarbonate + NH4(+) + ATP = carbamoyl phosphate + ADP + H2O + H(+). Its pathway is metabolic intermediate metabolism; carbamoyl phosphate degradation; CO(2) and NH(3) from carbamoyl phosphate: step 1/1. The polypeptide is Carbamate kinase (arcC) (Latilactobacillus sakei (Lactobacillus sakei)).